A 167-amino-acid polypeptide reads, in one-letter code: Secretion monitor (167 aa).

Residues 1-36 (MIGILNRWRQFGRRYFWPHLLLGMVAASFGLPQASA) form the signal peptide.

It belongs to the SecM family.

The protein resides in the cytoplasm. It is found in the cytosol. It localises to the periplasm. In terms of biological role, regulates secA expression by translational coupling of the secM secA operon. Translational pausing at a specific Pro residue 5 residues before the end of the protein may allow disruption of a mRNA repressor helix that normally suppresses secA translation initiation. This Erwinia tasmaniensis (strain DSM 17950 / CFBP 7177 / CIP 109463 / NCPPB 4357 / Et1/99) protein is Secretion monitor.